The sequence spans 201 residues: Probable GTP-binding protein EngB (201 aa).

The EngB-type G domain occupies 25-199 (HGIEIAFIGY…KSKLNFWYEK (175 aa)). GTP contacts are provided by residues 33-40 (GYSNSGKS), 60-64 (GRTQL), 78-81 (DLPG), 145-148 (TKCD), and 178-180 (FSS). Ser-40 and Thr-62 together coordinate Mg(2+).

The protein belongs to the TRAFAC class TrmE-Era-EngA-EngB-Septin-like GTPase superfamily. EngB GTPase family. Requires Mg(2+) as cofactor.

Functionally, necessary for normal cell division and for the maintenance of normal septation. The protein is Probable GTP-binding protein EngB of Buchnera aphidicola subsp. Schizaphis graminum (strain Sg).